Consider the following 81-residue polypeptide: U6-theraphotoxin-Hs1a (81 aa).

Residues methionine 1–alanine 21 form the signal peptide. Residues serine 22–arginine 48 constitute a propeptide that is removed on maturation. Disulfide bonds link cysteine 50–cysteine 65 and cysteine 57–cysteine 70.

The protein belongs to the neurotoxin 10 (Hwtx-1) family. 51 (Hntx-8) subfamily. Expressed by the venom gland.

It localises to the secreted. Binds to the nicotinic acetylcholine receptor. Blocks neuromuscular transmission. The sequence is that of U6-theraphotoxin-Hs1a from Cyriopagopus schmidti (Chinese bird spider).